Reading from the N-terminus, the 259-residue chain is 14-3-3-like protein GF14 omega (259 aa).

Residues S67, S109, and S190 each carry the phosphoserine modification. The residue at position 211 (T211) is a Phosphothreonine.

The protein belongs to the 14-3-3 family. In terms of assembly, interacts with CINV1.

Its subcellular location is the nucleus. The protein resides in the cytoplasm. Functionally, is associated with a DNA binding complex that binds to the G box, a well-characterized cis-acting DNA regulatory element found in plant genes. The polypeptide is 14-3-3-like protein GF14 omega (GRF2) (Arabidopsis thaliana (Mouse-ear cress)).